A 184-amino-acid chain; its full sequence is Ribosome maturation factor RimM (184 aa).

The region spanning 93-165 (DEGWYEHELV…YILITPPSGL (73 aa)) is the PRC barrel domain.

This sequence belongs to the RimM family. Binds ribosomal protein uS19.

It localises to the cytoplasm. An accessory protein needed during the final step in the assembly of 30S ribosomal subunit, possibly for assembly of the head region. Essential for efficient processing of 16S rRNA. May be needed both before and after RbfA during the maturation of 16S rRNA. It has affinity for free ribosomal 30S subunits but not for 70S ribosomes. This is Ribosome maturation factor RimM from Paenarthrobacter aurescens (strain TC1).